The chain runs to 137 residues: Putative FERT-1 protein (137 aa).

This Ascaris suum (Pig roundworm) protein is Putative FERT-1 protein (FERT-1).